The primary structure comprises 105 residues: Replication initiation control protein YabA (105 aa).

Residues H79, C81, C95, and C98 each contribute to the Zn(2+) site.

The protein belongs to the YabA family. Homotetramer. Interacts with both DnaA and DnaN, acting as a bridge between these two proteins. Zn(2+) is required as a cofactor.

The protein resides in the cytoplasm. It localises to the nucleoid. Involved in control of chromosome replication initiation. Inhibits the cooperative binding of DnaA to the oriC region, thus negatively regulating initiation of chromosome replication. Inhibits the ability of DnaA-ATP to form a helix on DNA; does not disassemble preformed DnaA-DNA helices. Decreases the residence time of DnaA on the chromosome at its binding sites (oriC, replication forks and promoter-binding sites). Tethers DnaA to the replication machinery via the DNA polymerase beta sliding clamp subunit (dnaN). Associates with oriC and other DnaA targets on the chromosome in a DnaA-dependent manner. This Streptococcus pneumoniae serotype 2 (strain D39 / NCTC 7466) protein is Replication initiation control protein YabA.